The following is a 319-amino-acid chain: Ribonuclease Z (319 aa).

Zn(2+) contacts are provided by His-62, His-64, Asp-66, His-67, His-145, Asp-215, and His-273. Asp-66 acts as the Proton acceptor in catalysis.

It belongs to the RNase Z family. In terms of assembly, homodimer. The cofactor is Zn(2+).

The enzyme catalyses Endonucleolytic cleavage of RNA, removing extra 3' nucleotides from tRNA precursor, generating 3' termini of tRNAs. A 3'-hydroxy group is left at the tRNA terminus and a 5'-phosphoryl group is left at the trailer molecule.. Zinc phosphodiesterase, which displays some tRNA 3'-processing endonuclease activity. Probably involved in tRNA maturation, by removing a 3'-trailer from precursor tRNA. In Borreliella burgdorferi (strain ATCC 35210 / DSM 4680 / CIP 102532 / B31) (Borrelia burgdorferi), this protein is Ribonuclease Z.